The sequence spans 324 residues: 1-deoxyxylulose-5-phosphate synthase YajO (324 aa).

The active-site Proton donor is tyrosine 61.

Belongs to the aldo/keto reductase family. Aldo/keto reductase 2 subfamily.

It catalyses the reaction D-ribulose 5-phosphate + AH2 = 1-deoxy-D-xylulose 5-phosphate + A + H2O. Its activity is regulated as follows. NADH, NADPH or ATP do not increase activity. Catalyzes the conversion of ribulose 5-phosphate (Ru5P) to 1-deoxy-D-xylulose 5-phosphate (DXP), providing a direct route from pentoses to terpenes. May play a role in biosynthesis of DXP under conditions of thiamine starvation. The protein is 1-deoxyxylulose-5-phosphate synthase YajO (yajO) of Escherichia coli (strain K12).